We begin with the raw amino-acid sequence, 589 residues long: Intermediate filament protein B (589 aa).

The segment at serine 1–glutamate 84 is head. An IF rod domain is found at glutamate 81 to valine 433. Positions methionine 85–leucine 116 are coil 1A. The interval arginine 117–glutamine 130 is linker 1. Residues tyrosine 131–leucine 268 form a coil 1B region. The interval glutamine 269–asparagine 285 is linker 12. The interval glutamate 286–valine 433 is coil 2. The segment at glycine 434 to glutamine 589 is tail. A disordered region spans residues histidine 446–phenylalanine 470. Residues threonine 466–threonine 584 enclose the LTD domain.

This sequence belongs to the intermediate filament family. As to quaternary structure, a and B can form homopolymers. Giant body muscle cells.

Its subcellular location is the cytoplasm. In Ascaris suum (Pig roundworm), this protein is Intermediate filament protein B.